We begin with the raw amino-acid sequence, 69 residues long: U2-agatoxin-Ao1e (69 aa).

Residues 1-20 (MRAIISVLLISAMVFSIIEA) form the signal peptide. Positions 21-34 (VPLEEGLQLFEAER) are excised as a propeptide. Disulfide bonds link Cys37–Cys53, Cys44–Cys58, and Cys52–Cys68.

Belongs to the neurotoxin 01 (U2-agtx) family. Expressed by the venom gland.

It localises to the secreted. Functionally, insect active toxin causing rapid but reversible paralysis in crickets. No activity shown in mammals. Does not show effect on mammalian voltage-gated calcium channels. The chain is U2-agatoxin-Ao1e from Agelena orientalis (Funnel-web spider).